Here is a 177-residue protein sequence, read N- to C-terminus: Alpha-crystallin B chain (177 aa).

N-acetylmethionine is present on methionine 1. The sHSP domain occupies 58 to 166 (RMPSWAQTGL…PERSVPISRD (109 aa)). Residues histidine 85, histidine 106, glutamate 108, histidine 113, and histidine 121 each contribute to the Zn(2+) site. Residues 155 to 169 (DVPERSVPISRDEKP) show a composition bias toward basic and acidic residues. A disordered region spans residues 155-177 (DVPERSVPISRDEKPAVAGPQQK).

It belongs to the small heat shock protein (HSP20) family. Heteromer composed of three CRYAA and one CRYAB subunits. Aggregates with homologous proteins, including the small heat shock protein HSPB1, to form large heteromeric complexes. Inter-subunit bridging via zinc ions enhances stability, which is crucial as there is no protein turn over in the lens. Interacts with HSPBAP1 and TTN/titin.

May contribute to the transparency and refractive index of the lens. This is Alpha-crystallin B chain (CRYAB) from Squalus acanthias (Spiny dogfish).